A 241-amino-acid chain; its full sequence is Host range factor p28 (241 aa).

Positions 21–131 (YIDEPNDIRL…QSILRGLVNW (111 aa)) constitute a KilA-N domain. The RING-type zinc finger occupies 172-225 (CGICYEVVYSKRLENDRYFGLLDSCNHIFCITCINIWHRTRRETGASDNCPICR).

The protein belongs to the orthopoxvirus OPG021 family.

It localises to the host cytoplasm. It carries out the reaction S-ubiquitinyl-[E2 ubiquitin-conjugating enzyme]-L-cysteine + [acceptor protein]-L-lysine = [E2 ubiquitin-conjugating enzyme]-L-cysteine + N(6)-ubiquitinyl-[acceptor protein]-L-lysine.. RING-finger E3 ubiquitin ligase which catalyzes the formation of both 'Lys-48'- and 'Lys-63'-linked polyubiquitin chains. Plays an important role in virulence by acting as an anti-apoptotic factor. This Ectromelia virus (strain Moscow) (ECTV) protein is Host range factor p28 (OPG021).